A 657-amino-acid chain; its full sequence is MSKYLATSVRLCLMVCIVGWLLMPSYKELDGWCSSLSSLERDKSNWLLTGLSTWFCIVPSGTDQSSLVSYFSPLEKLSKFVQDLDLDFVKLWWLETITLINTLNTTEKLLSGVTFSVVLWYPRILVTVLMLVWKLWFPVRFLVVASSLLCLRILVWPFEVIADVILETCAWFTRKYHKLMDVIEDLMMIPQRVMEWCSGNTAKMVVPTVASCVSESIESKLDRILMALGRKGTVLEAAQPGSDFVECEQWPNGLVAIRRHDGRIVGMGFLVVLNGKWRLVTAAHVARECKRGIMLSAGIDSKTVTFQDLDVVLQTQVDACIMNVPAGTAASLGVRKVVINRTPSESKVVRTYGYNSGKFCMSEGLVGTTSANMGFRHGCSTLRGWSGTPIYRDNKVVGIHSRCNGIYENFGLSLDLLVGRLESEETDRYARTMEEFNTEDRPVTPPMEFSWEFEEKFERVRSTRKSFARIESEVATFTATKLSGFDWTDDAPMDFDELPVFESTMVSVFQERPLGGLPISNGNKAEEKKITSEALEPSKSSTPEAAKHTRRRRRNKKKSKNSETGHGPEEQSQQQSRPSSPIPDDSAPVSSPPVSPPSTGSVPKSWTQAYTQKLVLLLGSMDGQSKEKVDLAILEAKSFASALFPPSKPKSSEESEK.

The next 3 membrane-spanning stretches (helical) occupy residues Tyr-4–Pro-24, Trp-46–Thr-62, and Leu-109–Leu-131. Positions Gln-239–Glu-434 constitute a Peptidase S39 domain. Residues His-284, Asp-318, and Ser-386 each act as for protease activity in the active site. Positions Pro-513–Ser-605 are disordered. Residues His-548–Ser-559 are compositionally biased toward basic residues. Positions Lys-560 to Glu-569 are enriched in basic and acidic residues. Low complexity predominate over residues Gln-571–Val-589.

Belongs to the peptidase S39B family.

The protein localises to the host membrane. Its function is as follows. Putative serine protease. The sequence is that of Putative serine protease from Mushroom bacilliform virus (isolate Australia/AUS LF-1) (MBV).